We begin with the raw amino-acid sequence, 304 residues long: Large ribosomal subunit protein uL2m (304 aa).

A mitochondrion-targeting transit peptide spans 1 to 60 (MALCALASALRSLSLASPAITARVPTLLPVGQSNVLLQLPSALALPAHRPVHMSADRSAK).

Belongs to the universal ribosomal protein uL2 family. As to quaternary structure, component of the mitochondrial ribosome large subunit (39S) which comprises a 16S rRNA and about 50 distinct proteins.

It is found in the mitochondrion. The polypeptide is Large ribosomal subunit protein uL2m (Mrpl2) (Rattus norvegicus (Rat)).